We begin with the raw amino-acid sequence, 152 residues long: SsrA-binding protein (152 aa).

Residues 130–152 form a disordered region; that stretch reads HDKRQDLKQRQDKREMERAMKQR. The segment covering 132-152 has biased composition (basic and acidic residues); sequence KRQDLKQRQDKREMERAMKQR.

Belongs to the SmpB family.

It is found in the cytoplasm. Functionally, required for rescue of stalled ribosomes mediated by trans-translation. Binds to transfer-messenger RNA (tmRNA), required for stable association of tmRNA with ribosomes. tmRNA and SmpB together mimic tRNA shape, replacing the anticodon stem-loop with SmpB. tmRNA is encoded by the ssrA gene; the 2 termini fold to resemble tRNA(Ala) and it encodes a 'tag peptide', a short internal open reading frame. During trans-translation Ala-aminoacylated tmRNA acts like a tRNA, entering the A-site of stalled ribosomes, displacing the stalled mRNA. The ribosome then switches to translate the ORF on the tmRNA; the nascent peptide is terminated with the 'tag peptide' encoded by the tmRNA and targeted for degradation. The ribosome is freed to recommence translation, which seems to be the essential function of trans-translation. The sequence is that of SsrA-binding protein from Thermosynechococcus vestitus (strain NIES-2133 / IAM M-273 / BP-1).